The primary structure comprises 430 residues: Bifunctional protein GlmU (430 aa).

The interval 1–223 (MSISVVILAA…EEEFKGVNSK (223 aa)) is pyrophosphorylase. Residues 8-11 (LAAG), lysine 22, and 81-82 (GT) each bind UDP-N-acetyl-alpha-D-glucosamine. Aspartate 102 is a Mg(2+) binding site. UDP-N-acetyl-alpha-D-glucosamine-binding residues include glycine 135, glutamate 149, asparagine 164, and asparagine 221. Asparagine 221 provides a ligand contact to Mg(2+). A linker region spans residues 224 to 244 (LDLARAEEIMQRRIKEALMMA). An N-acetyltransferase region spans residues 245–430 (GVTMCLPETI…NFFYKFFGDK (186 aa)). Arginine 308 and lysine 325 together coordinate UDP-N-acetyl-alpha-D-glucosamine. Histidine 336 (proton acceptor) is an active-site residue. Residues tyrosine 339 and asparagine 350 each contribute to the UDP-N-acetyl-alpha-D-glucosamine site. Acetyl-CoA is bound by residues alanine 353, 359–360 (NY), serine 378, alanine 396, and arginine 413.

In the N-terminal section; belongs to the N-acetylglucosamine-1-phosphate uridyltransferase family. It in the C-terminal section; belongs to the transferase hexapeptide repeat family. As to quaternary structure, homotrimer. Requires Mg(2+) as cofactor.

Its subcellular location is the cytoplasm. The catalysed reaction is alpha-D-glucosamine 1-phosphate + acetyl-CoA = N-acetyl-alpha-D-glucosamine 1-phosphate + CoA + H(+). It carries out the reaction N-acetyl-alpha-D-glucosamine 1-phosphate + UTP + H(+) = UDP-N-acetyl-alpha-D-glucosamine + diphosphate. It functions in the pathway nucleotide-sugar biosynthesis; UDP-N-acetyl-alpha-D-glucosamine biosynthesis; N-acetyl-alpha-D-glucosamine 1-phosphate from alpha-D-glucosamine 6-phosphate (route II): step 2/2. Its pathway is nucleotide-sugar biosynthesis; UDP-N-acetyl-alpha-D-glucosamine biosynthesis; UDP-N-acetyl-alpha-D-glucosamine from N-acetyl-alpha-D-glucosamine 1-phosphate: step 1/1. It participates in bacterial outer membrane biogenesis; LPS lipid A biosynthesis. Catalyzes the last two sequential reactions in the de novo biosynthetic pathway for UDP-N-acetylglucosamine (UDP-GlcNAc). The C-terminal domain catalyzes the transfer of acetyl group from acetyl coenzyme A to glucosamine-1-phosphate (GlcN-1-P) to produce N-acetylglucosamine-1-phosphate (GlcNAc-1-P), which is converted into UDP-GlcNAc by the transfer of uridine 5-monophosphate (from uridine 5-triphosphate), a reaction catalyzed by the N-terminal domain. The polypeptide is Bifunctional protein GlmU (Sulfurovum sp. (strain NBC37-1)).